Here is a 280-residue protein sequence, read N- to C-terminus: Merozoite surface protein 2 (280 aa).

The N-terminal stretch at 1–20 (MKVIKTLSIINFFIFVTFNI) is a signal peptide. Residues N22 and N36 are each glycosylated (N-linked (GlcNAc...) asparagine). The polymorphic region stretch occupies residues 44-206 (ANEGSNTKSV…PQTAENENPA (163 aa)). Residues 47–242 (GSNTKSVGAN…SQKECTDGNK (196 aa)) form a disordered region. The tract at residues 51–74 (KSVGANAPKADTIASGSQSSTNSA) is 5 X 12 AA tandem repeats of P-P-I-T-T-T-E-S-N-S-R-S. Positions 64-98 (ASGSQSSTNSASTSTTNNGESQTTTPTAADTPTAT) are enriched in low complexity. A compositionally biased stretch (polar residues) spans 99-149 (ESNSRSPPITTTESNSRSPPITTTESNSRSPPITTTESNSRSPPITTTESN). Tandem repeats lie at residues 105 to 116 (PPITTTESNSRS), 117 to 128 (PPITTTESNSRS), 129 to 140 (PPITTTESNSRS), and 141 to 152 (PPITTTESNSRS). The span at 150–163 (SRSPPITTTESSSS) shows a compositional bias: low complexity. The 5; partial repeat unit spans residues 153 to 160 (PPITTTES). A glycan (N-linked (GlcNAc...) asparagine) is linked at N168. Residues 170–182 (TDGKGEESEKQNE) are compositionally biased toward basic and acidic residues. Residues N184 and N229 are each glycosylated (N-linked (GlcNAc...) asparagine). Over residues 233 to 242 (SQKECTDGNK) the composition is skewed to basic and acidic residues. A disulfide bridge links C237 with C245. N-linked (GlcNAc...) asparagine glycans are attached at residues N253 and N254. N254 carries GPI-anchor amidated asparagine lipidation. A propeptide spans 255-280 (SSNIASINKFVVLISATLVLSFAIFI) (removed in mature form).

The protein localises to the cell membrane. Its function is as follows. May play a role in the merozoite attachment to the erythrocyte. This chain is Merozoite surface protein 2, found in Plasmodium falciparum (isolate K1 / Thailand).